Here is a 594-residue protein sequence, read N- to C-terminus: Potassium-transporting ATPase potassium-binding subunit (594 aa).

10 helical membrane-spanning segments follow: residues 3-23 (ADFL…APLL), 67-87 (AVAM…LQRL), 136-156 (ALTV…IALV), 179-199 (LYVL…QGVV), 287-307 (LEML…GEMV), 314-334 (VAIL…AAYF), 415-435 (GLYG…LMIG), 453-473 (VALV…VAVL), 519-539 (VLLG…ILAL), and 562-582 (LFVA…YVPA).

Belongs to the KdpA family. As to quaternary structure, the system is composed of three essential subunits: KdpA, KdpB and KdpC.

Its subcellular location is the cell inner membrane. Part of the high-affinity ATP-driven potassium transport (or Kdp) system, which catalyzes the hydrolysis of ATP coupled with the electrogenic transport of potassium into the cytoplasm. This subunit binds the periplasmic potassium ions and delivers the ions to the membrane domain of KdpB through an intramembrane tunnel. The chain is Potassium-transporting ATPase potassium-binding subunit from Bordetella pertussis (strain Tohama I / ATCC BAA-589 / NCTC 13251).